The chain runs to 304 residues: tRNA-uridine aminocarboxypropyltransferase 1 (304 aa).

At S2 the chain carries N-acetylserine. A DXTW motif is present at residues D206 to W209.

The protein belongs to the TDD superfamily. DTWD1 family.

It is found in the nucleus. The enzyme catalyses a uridine in tRNA + S-adenosyl-L-methionine = a 3-[(3S)-3-amino-3-carboxypropyl]uridine in tRNA + S-methyl-5'-thioadenosine + H(+). Functionally, catalyzes the formation of 3-(3-amino-3-carboxypropyl)uridine (acp3U) at position 20 in the D-loop of several cytoplasmic tRNAs (acp3U(20)). The protein is tRNA-uridine aminocarboxypropyltransferase 1 of Pongo abelii (Sumatran orangutan).